The chain runs to 370 residues: Ubiquinone biosynthesis O-methyltransferase, mitochondrial (370 aa).

The transit peptide at 1-86 directs the protein to the mitochondrion; sequence MWRGGRLGSR…TYRTPWKRLY (86 aa). Arg-125 is a binding site for S-adenosyl-L-methionine. N6-acetyllysine occurs at positions 144 and 150. The S-adenosyl-L-methionine site is built by Gly-155 and Asp-176. The residue at position 197 (Lys-197) is an N6-acetyllysine. Ser-223 contacts S-adenosyl-L-methionine. Mg(2+) contacts are provided by Glu-224, Glu-227, and His-228. Residues 336 to 370 are disordered; it reads AQEHQEPAESALKGETGALHANTSGSPSVREEQRT.

Belongs to the class I-like SAM-binding methyltransferase superfamily. UbiG/COQ3 family. Component of a multi-subunit COQ enzyme complex, composed of at least COQ3, COQ4, COQ5, COQ6, COQ7 and COQ9. The cofactor is Mg(2+).

The protein resides in the mitochondrion inner membrane. It catalyses the reaction 3,4-dihydroxy-5-(all-trans-decaprenyl)benzoate + S-adenosyl-L-methionine = 4-hydroxy-3-methoxy-5-(all-trans-decaprenyl)benzoate + S-adenosyl-L-homocysteine + H(+). The catalysed reaction is a 3-demethylubiquinone + S-adenosyl-L-methionine = a ubiquinone + S-adenosyl-L-homocysteine. The enzyme catalyses 3-demethylubiquinol-10 + S-adenosyl-L-methionine = ubiquinol-10 + S-adenosyl-L-homocysteine + H(+). Its pathway is cofactor biosynthesis; ubiquinone biosynthesis. O-methyltransferase required for two non-consecutive steps during ubiquinone biosynthesis. Catalyzes the 2 O-methylation of 3,4-dihydroxy-5-(all-trans-decaprenyl)benzoic acid into 4-hydroxy-3-methoxy-5-(all-trans-decaprenyl)benzoic acid. Also catalyzes the last step of ubiquinone biosynthesis by mediating methylation of 3-demethylubiquinone into ubiquinone. Also able to mediate the methylation of 3-demethylubiquinol-10 into ubiquinol-10. The sequence is that of Ubiquinone biosynthesis O-methyltransferase, mitochondrial from Mus musculus (Mouse).